Here is a 434-residue protein sequence, read N- to C-terminus: Probable oxaloacetate decarboxylase beta chain (434 aa).

Helical transmembrane passes span 13-35 (IMHL…WLAI), 122-144 (VLAL…FMGV), 159-181 (TLLL…LLLN), 186-208 (ISFT…PTAI), 223-245 (AVAA…RALT), 266-288 (ILFP…PLLG), 308-327 (TAQN…AVGS), 339-361 (TLGI…VIMA), and 403-425 (FLLM…AAGV).

Belongs to the GcdB/MmdB/OadB family. As to quaternary structure, heterotrimer of an alpha, a beta and a gamma subunit. Na(+) is required as a cofactor.

The protein resides in the cell membrane. It carries out the reaction oxaloacetate + 2 Na(+)(in) + H(+) = pyruvate + 2 Na(+)(out) + CO2. In terms of biological role, catalyzes the decarboxylation of oxaloacetate coupled to Na(+) translocation. The sequence is that of Probable oxaloacetate decarboxylase beta chain (oadB) from Pasteurella multocida (strain Pm70).